The chain runs to 482 residues: 2-succinylbenzoate--CoA ligase (482 aa).

It belongs to the ATP-dependent AMP-binding enzyme family. MenE subfamily.

It carries out the reaction 2-succinylbenzoate + ATP + CoA = 2-succinylbenzoyl-CoA + AMP + diphosphate. The protein operates within quinol/quinone metabolism; 1,4-dihydroxy-2-naphthoate biosynthesis; 1,4-dihydroxy-2-naphthoate from chorismate: step 5/7. It participates in quinol/quinone metabolism; menaquinone biosynthesis. Its function is as follows. Converts 2-succinylbenzoate (OSB) to 2-succinylbenzoyl-CoA (OSB-CoA). This chain is 2-succinylbenzoate--CoA ligase, found in Bacillus cereus (strain ZK / E33L).